The sequence spans 204 residues: MRG/MORF4L-binding protein (204 aa).

Residues 1 to 15 (MGEAEVGGTGAPGDK) show a composition bias toward gly residues. The interval 1–27 (MGEAEVGGTGAPGDKGPGEAAPSPAEE) is disordered. N-acetylglycine is present on Gly2. Ser23 is modified (phosphoserine). A Glycyl lysine isopeptide (Lys-Gly) (interchain with G-Cter in SUMO2) cross-link involves residue Lys127. Composition is skewed to basic and acidic residues over residues 128–140 (EEMKEDVDPHSGA) and 153–175 (ALEKSSKDKEKNSSDLGCKEGAD). The disordered stretch occupies residues 128–204 (EEMKEDVDPH…SPSAAKRRRT (77 aa)). Residues 189-198 (ANSNPSSPSA) show a composition bias toward low complexity. A phosphoserine mark is found at Ser191 and Ser195.

It belongs to the EAF7 family. In terms of assembly, component of the NuA4 histone acetyltransferase complex which contains the catalytic subunit KAT5/TIP60 and the subunits EP400, TRRAP/PAF400, BRD8/SMAP, EPC1, DMAP1/DNMAP1, RUVBL1/TIP49, RUVBL2, ING3, actin, ACTL6A/BAF53A, MORF4L1/MRG15, MORF4L2/MRGX, MRGBP, YEATS4/GAS41, VPS72/YL1 and MEAF6. MRGBP may interact directly with MORF4L1/MRG15 and MORF4L2/MRGX.

The protein localises to the nucleus. Its function is as follows. Component of the NuA4 histone acetyltransferase (HAT) complex which is involved in transcriptional activation of select genes principally by acetylation of nucleosomal histones H4 and H2A. This modification may both alter nucleosome - DNA interactions and promote interaction of the modified histones with other proteins which positively regulate transcription. This complex may be required for the activation of transcriptional programs associated with oncogene and proto-oncogene mediated growth induction, tumor suppressor mediated growth arrest and replicative senescence, apoptosis, and DNA repair. NuA4 may also play a direct role in DNA repair when recruited to sites of DNA damage. This is MRG/MORF4L-binding protein (Mrgbp) from Mus musculus (Mouse).